Here is a 361-residue protein sequence, read N- to C-terminus: Phospho-N-acetylmuramoyl-pentapeptide-transferase (361 aa).

The next 10 membrane-spanning stretches (helical) occupy residues 26–46 (SILA…VLIQ), 73–93 (TMGG…WGDL), 98–118 (VWLV…DDWI), 139–159 (IFGL…AAVT), 168–188 (IALP…IVGF), 200–220 (GLAI…AYAS), 237–257 (AGDL…FLWF), 264–284 (VFMG…IAVI), 289–309 (LVLV…IIQV), and 339–359 (VIVR…ATLK).

Belongs to the glycosyltransferase 4 family. MraY subfamily. The cofactor is Mg(2+).

The protein localises to the cell inner membrane. It carries out the reaction UDP-N-acetyl-alpha-D-muramoyl-L-alanyl-gamma-D-glutamyl-meso-2,6-diaminopimeloyl-D-alanyl-D-alanine + di-trans,octa-cis-undecaprenyl phosphate = di-trans,octa-cis-undecaprenyl diphospho-N-acetyl-alpha-D-muramoyl-L-alanyl-D-glutamyl-meso-2,6-diaminopimeloyl-D-alanyl-D-alanine + UMP. The protein operates within cell wall biogenesis; peptidoglycan biosynthesis. Functionally, catalyzes the initial step of the lipid cycle reactions in the biosynthesis of the cell wall peptidoglycan: transfers peptidoglycan precursor phospho-MurNAc-pentapeptide from UDP-MurNAc-pentapeptide onto the lipid carrier undecaprenyl phosphate, yielding undecaprenyl-pyrophosphoryl-MurNAc-pentapeptide, known as lipid I. This Xylella fastidiosa (strain 9a5c) protein is Phospho-N-acetylmuramoyl-pentapeptide-transferase.